Here is a 327-residue protein sequence, read N- to C-terminus: MKIIAFDVMGSDKGVGPAVLASINFVKKNLDYKIILVGDKTLITKYVSENERIEIYDEPLEVKKGENLKAVLSKTTSMSVAIDLVKDNKAEVVLSAGDSASYLALCVIKLKRLEGITRPAFMPIFPTILDDKKFVLLDVGANIEVDTEYLVQWAKLGSVFAKIMWNIDKPNVGILNIGTEDFKGFKYHQEANQILKEANLSEMNYKGFVEPRDILKGNFDVIVADGYGGNLVLKSLEGTVIDFSSLIKRKITSTFFRKIGALILKKSFKEIKEHLDYRNVGGAWVIGVNSIAVKAHGSSDEKAFKGAFNQIKIAVENNVIENFKEIL.

Belongs to the PlsX family. As to quaternary structure, homodimer. Probably interacts with PlsY.

It localises to the cytoplasm. It carries out the reaction a fatty acyl-[ACP] + phosphate = an acyl phosphate + holo-[ACP]. It participates in lipid metabolism; phospholipid metabolism. Its function is as follows. Catalyzes the reversible formation of acyl-phosphate (acyl-PO(4)) from acyl-[acyl-carrier-protein] (acyl-ACP). This enzyme utilizes acyl-ACP as fatty acyl donor, but not acyl-CoA. The chain is Phosphate acyltransferase from Mycoplasma mobile (strain ATCC 43663 / 163K / NCTC 11711) (Mesomycoplasma mobile).